We begin with the raw amino-acid sequence, 371 residues long: Peptide chain release factor 2 (371 aa).

At glutamine 252 the chain carries N5-methylglutamine.

Belongs to the prokaryotic/mitochondrial release factor family. In terms of processing, methylated by PrmC. Methylation increases the termination efficiency of RF2.

Its subcellular location is the cytoplasm. Its function is as follows. Peptide chain release factor 2 directs the termination of translation in response to the peptide chain termination codons UGA and UAA. In Staphylococcus haemolyticus (strain JCSC1435), this protein is Peptide chain release factor 2.